The primary structure comprises 353 residues: Peptide chain release factor 1 (353 aa).

Q230 is modified (N5-methylglutamine).

Belongs to the prokaryotic/mitochondrial release factor family. Methylated by PrmC. Methylation increases the termination efficiency of RF1.

The protein localises to the cytoplasm. Peptide chain release factor 1 directs the termination of translation in response to the peptide chain termination codons UAG and UAA. The polypeptide is Peptide chain release factor 1 (Leptospira biflexa serovar Patoc (strain Patoc 1 / ATCC 23582 / Paris)).